A 665-amino-acid chain; its full sequence is Phenol hydroxylase (665 aa).

FAD-binding positions include 18–19 (PA), 43–45 (DKR), 51–56 (NGQADG), glutamine 118, tyrosine 290, aspartate 358, and 368–372 (GQGMN). Aspartate 55 contacts substrate. Tyrosine 290 is a substrate binding site.

The protein belongs to the PheA/TfdB FAD monooxygenase family. Homodimer. It depends on FAD as a cofactor.

The catalysed reaction is phenol + NADPH + O2 + H(+) = catechol + NADP(+) + H2O. It functions in the pathway aromatic compound metabolism; phenol degradation. Inhibited by excess phenol. Heavy metals such AsCuSO(4), AgNO(3), or HgCl(2) severely inhibit activity. Hydroxylates phenol to catechol. Phenol is the best substrate, but the enzyme also accepts isomeric diphenols, hydroxyl-, amino-, halogen- or methyl-substituted phenols and, to a lesser degree, cresols. In Cutaneotrichosporon cutaneum (Yeast), this protein is Phenol hydroxylase.